Here is a 35-residue protein sequence, read N- to C-terminus: Alpha-amanitin proprotein (35 aa).

Positions M1 to P10 are excised as a propeptide. (3R,4R)-4,5-dihydroxyisoleucine; in form alpha-amanitin is present on I11. (3R,4S)-4-hydroxyisoleucine; in form gamma-amanitin is present on I11. The cyclopeptide (Ile-Pro) cross-link spans I11–P18. A cross-link (2'-cysteinyl-6'-hydroxytryptophan sulfoxide (Trp-Cys)) is located at residues W12 to C16. Position 18 is a 4-hydroxyproline (P18). Residues C19–C35 constitute a propeptide that is removed on maturation.

The protein belongs to the MSDIN fungal toxin family. In terms of processing, processed by the macrocyclase-peptidase enzyme POPB to yield a toxic cyclic decapeptide. POPB first removes 10 residues from the N-terminus. Conformational trapping of the remaining peptide forces the enzyme to release this intermediate rather than proceed to macrocyclization. The enzyme rebinds the remaining peptide in a different conformation and catalyzes macrocyclization of the N-terminal 8 residues.

Major toxin belonging to the bicyclic octapeptides amatoxins that acts by binding non-competitively to RNA polymerase II and greatly slowing the elongation of transcripts from target promoters. In Amanita bisporigera (Destroying angel), this protein is Alpha-amanitin proprotein.